The sequence spans 203 residues: Holliday junction branch migration complex subunit RuvA (203 aa).

The domain I stretch occupies residues 1–64; the sequence is MIGRLRGIII…EDAQLLYGFN (64 aa). The domain II stretch occupies residues 65-142; sequence NKQERTLFKE…KGLHGDLFTP (78 aa). The segment at 143 to 154 is flexible linker; it reads AADLVLTSPASP. The interval 155-203 is domain III; the sequence is ATDDAEQEAVAALVALGYKPQEASRMVSKIARPDASSETLIREALRAAL.

Belongs to the RuvA family. Homotetramer. Forms an RuvA(8)-RuvB(12)-Holliday junction (HJ) complex. HJ DNA is sandwiched between 2 RuvA tetramers; dsDNA enters through RuvA and exits via RuvB. An RuvB hexamer assembles on each DNA strand where it exits the tetramer. Each RuvB hexamer is contacted by two RuvA subunits (via domain III) on 2 adjacent RuvB subunits; this complex drives branch migration. In the full resolvosome a probable DNA-RuvA(4)-RuvB(12)-RuvC(2) complex forms which resolves the HJ.

Its subcellular location is the cytoplasm. Its function is as follows. The RuvA-RuvB-RuvC complex processes Holliday junction (HJ) DNA during genetic recombination and DNA repair, while the RuvA-RuvB complex plays an important role in the rescue of blocked DNA replication forks via replication fork reversal (RFR). RuvA specifically binds to HJ cruciform DNA, conferring on it an open structure. The RuvB hexamer acts as an ATP-dependent pump, pulling dsDNA into and through the RuvAB complex. HJ branch migration allows RuvC to scan DNA until it finds its consensus sequence, where it cleaves and resolves the cruciform DNA. In Shigella boydii serotype 18 (strain CDC 3083-94 / BS512), this protein is Holliday junction branch migration complex subunit RuvA.